We begin with the raw amino-acid sequence, 447 residues long: Adenylosuccinate synthetase (447 aa).

GTP contacts are provided by residues 35-41 and 63-65; these read GDEGKGK and GHT. Catalysis depends on aspartate 36, which acts as the Proton acceptor. 2 residues coordinate Mg(2+): aspartate 36 and glycine 63. IMP contacts are provided by residues 36–39, 61–64, threonine 153, arginine 167, asparagine 245, threonine 260, and arginine 324; these read DEGK and NAGH. Residue histidine 64 is the Proton donor of the active site. 320–326 provides a ligand contact to substrate; sequence VTTKRKR. GTP is bound by residues arginine 326, 352-354, and 435-437; these read KLD and GVG.

It belongs to the adenylosuccinate synthetase family. In terms of assembly, homodimer. The cofactor is Mg(2+).

It is found in the cytoplasm. The enzyme catalyses IMP + L-aspartate + GTP = N(6)-(1,2-dicarboxyethyl)-AMP + GDP + phosphate + 2 H(+). Its pathway is purine metabolism; AMP biosynthesis via de novo pathway; AMP from IMP: step 1/2. Plays an important role in the de novo pathway and in the salvage pathway of purine nucleotide biosynthesis. Catalyzes the first committed step in the biosynthesis of AMP from IMP. The chain is Adenylosuccinate synthetase from Drosophila sechellia (Fruit fly).